Here is a 279-residue protein sequence, read N- to C-terminus: Shikimate dehydrogenase (NADP(+)) (279 aa).

Shikimate is bound by residues 20–22 and T67; that span reads SRS. K71 (proton acceptor) is an active-site residue. D83 contacts NADP(+). Positions 92 and 108 each coordinate shikimate. Residues 134–138 and L223 contribute to the NADP(+) site; that span reads GAGGA. Shikimate is bound at residue Y225. Residue G246 coordinates NADP(+).

This sequence belongs to the shikimate dehydrogenase family. Homodimer.

The enzyme catalyses shikimate + NADP(+) = 3-dehydroshikimate + NADPH + H(+). Its pathway is metabolic intermediate biosynthesis; chorismate biosynthesis; chorismate from D-erythrose 4-phosphate and phosphoenolpyruvate: step 4/7. Its function is as follows. Involved in the biosynthesis of the chorismate, which leads to the biosynthesis of aromatic amino acids. Catalyzes the reversible NADPH linked reduction of 3-dehydroshikimate (DHSA) to yield shikimate (SA). In Cereibacter sphaeroides (strain ATCC 17025 / ATH 2.4.3) (Rhodobacter sphaeroides), this protein is Shikimate dehydrogenase (NADP(+)).